The sequence spans 231 residues: Achaete-scute homolog 1 (231 aa).

2 disordered regions span residues 1–24 (MESS…FLPP) and 39–92 (AAAA…PELM). Low complexity predominate over residues 39 to 51 (AAAAAQSAQQQQP). Residues 76–85 (SAAKQVKRQR) are compositionally biased toward basic residues. Residues 113-165 (AAVARRNERERNRVKLVNLGFATLREHVPNGAANKKMSKVETLRSAVEYIRAL) form the bHLH domain. Lysine 151 carries the N6-acetyllysine modification.

In terms of assembly, efficient DNA binding requires dimerization with another bHLH protein. Forms a heterodimer with TCF3. As to expression, developing CNS and PNS at embryonic and postnatal stages. Expressed in the epithelium of glandular stomach.

The protein localises to the nucleus. Transcription factor that plays a key role in neuronal differentiation: acts as a pioneer transcription factor, accessing closed chromatin to allow other factors to bind and activate neural pathways. Directly binds the E box motif (5'-CANNTG-3') on promoters and promotes transcription of neuronal genes. The combination of three transcription factors, ASCL1, POU3F2/BRN2 and MYT1L, is sufficient to reprogram fibroblasts and other somatic cells into induced neuronal (iN) cells in vitro. Plays a role at early stages of development of specific neural lineages in most regions of the CNS, and of several lineages in the PNS. Essential for the generation of olfactory and autonomic neurons. Acts synergistically with FOXN4 to specify the identity of V2b neurons rather than V2a from bipotential p2 progenitors during spinal cord neurogenesis, probably through DLL4-NOTCH signaling activation. Involved in the regulation of neuroendocrine cell development in the glandular stomach. This chain is Achaete-scute homolog 1, found in Mus musculus (Mouse).